Consider the following 490-residue polypeptide: Cytochrome P450 monooxygenase aclL (490 aa).

A helical transmembrane segment spans residues 1–21; the sequence is MLFSLGPLTIVYGLVIFVVAK. The N-linked (GlcNAc...) asparagine glycan is linked to N176. C434 serves as a coordination point for heme.

This sequence belongs to the cytochrome P450 family. Requires heme as cofactor.

The protein resides in the membrane. It functions in the pathway mycotoxin biosynthesis. Its function is as follows. Cytochrome P450 monooxygenase; part of the gene cluster that mediates the biosynthesis of aspirochlorine (or antibiotic A30641), an unusual halogenated spiro compound with distinctive antifungal properties due to selective inhibition of protein biosynthesis, and which is also active against bacteria, viruses, and murine tumor cells. The non-ribosomal peptide synthetase (NRPS) aclP is responsible the formation of the diketopiperazine (DKP) core from the condensation of 2 phenylalanine residues. One Phe residue is tailored into chlorotyrosine by hydroxylation and chlorination, whereas the second Phe undergoes an unprecedented C-C bond cleavage to be converted into glycine. After formation of the DKP, sulfur is incorporated into the DKP by conjugation with glutathione by aclG, followed by its stepwise degradation to the thiol by aclI, aclJ and aclK, and the dithiol oxidation by aclT. In addition, oxygenases (aclB, aclC, aclL and aclO) and O-methyltransferases (aclM and aclU) act as tailoring enzymes to produce the intermediate dechloroaspirochlorine. Ultimately, chlorination of dechloroaspirochlorine by the halogenase aclH is the last step in the aspirochlorine pathway. The sequence is that of Cytochrome P450 monooxygenase aclL from Aspergillus oryzae (strain ATCC 42149 / RIB 40) (Yellow koji mold).